We begin with the raw amino-acid sequence, 506 residues long: Probable cytochrome P450 519E1 (506 aa).

Residues 1–21 traverse the membrane as a helical segment; that stretch reads MGIGLIILYLLIGLLAYDFTK. Heme is bound at residue Cys-453.

Belongs to the cytochrome P450 family. Requires heme as cofactor.

It is found in the membrane. In Dictyostelium discoideum (Social amoeba), this protein is Probable cytochrome P450 519E1 (cyp519E1).